Consider the following 347-residue polypeptide: Lipoyl synthase (347 aa).

Residues cysteine 55, cysteine 60, cysteine 66, cysteine 81, cysteine 85, cysteine 88, and serine 292 each coordinate [4Fe-4S] cluster. In terms of domain architecture, Radical SAM core spans 67–281 (WEDREASFLI…SEAAYDMGFP (215 aa)).

The protein belongs to the radical SAM superfamily. Lipoyl synthase family. [4Fe-4S] cluster serves as cofactor.

It is found in the cytoplasm. It catalyses the reaction [[Fe-S] cluster scaffold protein carrying a second [4Fe-4S](2+) cluster] + N(6)-octanoyl-L-lysyl-[protein] + 2 oxidized [2Fe-2S]-[ferredoxin] + 2 S-adenosyl-L-methionine + 4 H(+) = [[Fe-S] cluster scaffold protein] + N(6)-[(R)-dihydrolipoyl]-L-lysyl-[protein] + 4 Fe(3+) + 2 hydrogen sulfide + 2 5'-deoxyadenosine + 2 L-methionine + 2 reduced [2Fe-2S]-[ferredoxin]. The protein operates within protein modification; protein lipoylation via endogenous pathway; protein N(6)-(lipoyl)lysine from octanoyl-[acyl-carrier-protein]: step 2/2. Its function is as follows. Catalyzes the radical-mediated insertion of two sulfur atoms into the C-6 and C-8 positions of the octanoyl moiety bound to the lipoyl domains of lipoate-dependent enzymes, thereby converting the octanoylated domains into lipoylated derivatives. This is Lipoyl synthase from Corynebacterium urealyticum (strain ATCC 43042 / DSM 7109).